Consider the following 410-residue polypeptide: Lissencephaly-1 homolog (410 aa).

In terms of domain architecture, LisH spans 7-39 (QRDELNRAIADYLRSNGYEEAYSVFKKEAELDV). Residues 56-82 (TSVIRLQKKVMELESKLNEAKEEFTSG) adopt a coiled-coil conformation. WD repeat units lie at residues 106 to 147 (GHRS…RTLK), 148 to 187 (GHTD…CIRT), 190 to 229 (GHDH…CVKT), 232 to 271 (GHRE…CKAE), 274 to 333 (EHEH…CLMT), 336 to 377 (GHDN…KTLN), and 378 to 410 (AHEH…WECR).

It belongs to the WD repeat LIS1/nudF family. As to quaternary structure, can self-associate. Component of the cytosolic PAF-AH (I) heterotetrameric enzyme, which is composed of PAFAH1B1 (beta), PAFAH1B2 (alpha2) and PAFAH1B3 (alpha1) subunits. The catalytic activity of the enzyme resides in the alpha1 (PAFAH1B3) and alpha2 (PAFAH1B2) subunits, whereas the beta subunit (PAFAH1B1) has regulatory activity. Trimer formation is not essential for the catalytic activity. Interacts with dynein, dynactin, NDE1 and NDEL1.

It localises to the cytoplasm. It is found in the cytoskeleton. Its subcellular location is the microtubule organizing center. The protein localises to the centrosome. Its function is as follows. Regulatory subunit (beta subunit) of the cytosolic type I platelet-activating factor (PAF) acetylhydrolase (PAF-AH (I)), an enzyme that catalyzes the hydrolyze of the acetyl group at the sn-2 position of PAF and its analogs and participates in PAF inactivation. Regulates the PAF-AH (I) activity in a catalytic dimer composition-dependent manner. Positively regulates the activity of the minus-end directed microtubule motor protein dynein. May enhance dynein-mediated microtubule sliding by targeting dynein to the microtubule plus end. Required for several dynein- and microtubule-dependent processes such as the maintenance of Golgi integrity, the peripheral transport of microtubule fragments and the coupling of the nucleus and centrosome. May be required for proliferation of neuronal precursors and neuronal migration. The protein is Lissencephaly-1 homolog of Gallus gallus (Chicken).